A 62-amino-acid chain; its full sequence is UPF0434 protein Rpic_2808 (62 aa).

It belongs to the UPF0434 family.

The chain is UPF0434 protein Rpic_2808 from Ralstonia pickettii (strain 12J).